The sequence spans 186 residues: ATP synthase subunit delta (186 aa).

This sequence belongs to the ATPase delta chain family. F-type ATPases have 2 components, F(1) - the catalytic core - and F(0) - the membrane proton channel. F(1) has five subunits: alpha(3), beta(3), gamma(1), delta(1), epsilon(1). F(0) has three main subunits: a(1), b(2) and c(10-14). The alpha and beta chains form an alternating ring which encloses part of the gamma chain. F(1) is attached to F(0) by a central stalk formed by the gamma and epsilon chains, while a peripheral stalk is formed by the delta and b chains.

Its subcellular location is the cell inner membrane. Its function is as follows. F(1)F(0) ATP synthase produces ATP from ADP in the presence of a proton or sodium gradient. F-type ATPases consist of two structural domains, F(1) containing the extramembraneous catalytic core and F(0) containing the membrane proton channel, linked together by a central stalk and a peripheral stalk. During catalysis, ATP synthesis in the catalytic domain of F(1) is coupled via a rotary mechanism of the central stalk subunits to proton translocation. In terms of biological role, this protein is part of the stalk that links CF(0) to CF(1). It either transmits conformational changes from CF(0) to CF(1) or is implicated in proton conduction. The chain is ATP synthase subunit delta from Bacteroides thetaiotaomicron (strain ATCC 29148 / DSM 2079 / JCM 5827 / CCUG 10774 / NCTC 10582 / VPI-5482 / E50).